We begin with the raw amino-acid sequence, 588 residues long: Catechol oxidase B, chloroplastic (588 aa).

The transit peptide at 1–88 (SSSSTTTIPL…AANLAPLASA (88 aa)) directs the protein to the chloroplast. Intrachain disulfides connect Cys-99–Cys-115 and Cys-114–Cys-181. Cu cation contacts are provided by His-180, His-198, His-207, His-329, His-333, and His-364. Positions 184 to 198 (CNGAYKVGGKELQVH) form a cross-link, 2'-(S-cysteinyl)-histidine (Cys-His).

It belongs to the tyrosinase family. Requires Cu(2+) as cofactor.

The protein localises to the plastid. The protein resides in the chloroplast thylakoid lumen. It carries out the reaction 2 catechol + O2 = 2 1,2-benzoquinone + 2 H2O. In terms of biological role, catalyzes the oxidation of mono- and o-diphenols to o-diquinones. This Solanum tuberosum (Potato) protein is Catechol oxidase B, chloroplastic.